The primary structure comprises 759 residues: Rho GTPase-activating protein 26 (759 aa).

The BAR domain maps to 7-262 (EFSDCYLDSP…MKENPHEHLA (256 aa)). The PH domain maps to 265 to 369 (PYTMEGYLYV…WMEAMDGREP (105 aa)). Residues 383 to 568 (AQLDNIGFSI…IIIENYEKMF (186 aa)) form the Rho-GAP domain. The segment at 578–701 (NSQLHLSRKR…STSSDSSPVS (124 aa)) is disordered. Positions 608–617 (HNTEKEEKRN) are enriched in basic and acidic residues. The segment covering 618–637 (SVNSSAESVSSSNANSSANS) has biased composition (low complexity). The span at 638–650 (TCTQCSNMNNLNA) shows a compositional bias: polar residues. Positions 679-701 (PMFSAPSSPMPTSSTSSDSSPVS) are enriched in low complexity. One can recognise an SH3 domain in the interval 701–759 (SVPRKAKALYACKAEHDSELSFSAGTVFDNVYPSQEPGWLEGILNGKTGLIPENYVEFL).

The protein localises to the cell junction. It is found in the focal adhesion. It localises to the cytoplasm. Its subcellular location is the cytoskeleton. The protein resides in the endosome membrane. Its function is as follows. GTPase-activating protein for rhoa and cdc42. This is Rho GTPase-activating protein 26 (arhgap26) from Xenopus tropicalis (Western clawed frog).